A 302-amino-acid chain; its full sequence is UDP-N-acetylenolpyruvoylglucosamine reductase (302 aa).

The 180-residue stretch at 31-210 (IGGQTKVYFR…ENEVLELKKK (180 aa)) folds into the FAD-binding PCMH-type domain. The active site involves Arg-175. Residue Ser-224 is the Proton donor of the active site. The active site involves Glu-297.

This sequence belongs to the MurB family. The cofactor is FAD.

The protein resides in the cytoplasm. The enzyme catalyses UDP-N-acetyl-alpha-D-muramate + NADP(+) = UDP-N-acetyl-3-O-(1-carboxyvinyl)-alpha-D-glucosamine + NADPH + H(+). It functions in the pathway cell wall biogenesis; peptidoglycan biosynthesis. In terms of biological role, cell wall formation. The sequence is that of UDP-N-acetylenolpyruvoylglucosamine reductase from Pelagibacter ubique (strain HTCC1062).